Reading from the N-terminus, the 175-residue chain is Outer membrane protein assembly factor BamE (175 aa).

The N-terminal stretch at Met-1 to Gly-21 is a signal peptide. Residue Cys-22 is the site of N-palmitoyl cysteine attachment. Cys-22 is lipidated: S-diacylglycerol cysteine. 2 disordered regions span residues Ala-117–Ser-147 and Ile-156–Gln-175.

Belongs to the BamE family. In terms of assembly, part of the Bam complex.

Its subcellular location is the cell outer membrane. Part of the outer membrane protein assembly complex, which is involved in assembly and insertion of beta-barrel proteins into the outer membrane. May have a structural role in maintaining the cell envelope integrity. The chain is Outer membrane protein assembly factor BamE from Pseudomonas fluorescens.